The following is a 234-amino-acid chain: Small ribosomal subunit protein uS2 (234 aa).

It belongs to the universal ribosomal protein uS2 family.

The protein is Small ribosomal subunit protein uS2 of Prochlorococcus marinus (strain AS9601).